We begin with the raw amino-acid sequence, 601 residues long: Tubulin polyglutamylase ttll-4 (601 aa).

Over residues 1 to 18 (MSSGYSSAPSVSHTSSDT) the composition is skewed to polar residues. Residues 1-37 (MSSGYSSAPSVSHTSSDTDLNRIDSYDDGAEETTDEQ) form a disordered region. One can recognise a TTL domain in the interval 138 to 476 (QARLTWCHNS…YVPPSFDKLS (339 aa)). ATP contacts are provided by residues lysine 254, 260 to 261 (RG), 282 to 285 (QHYI), and 295 to 297 (KFD). Arginine 260 contributes to the a protein binding site. Residue arginine 321 participates in L-glutamate binding. 342 to 343 (TN) contacts ATP. Residues tyrosine 344, serine 345, and lysine 362 each coordinate L-glutamate. Mg(2+) is bound by residues aspartate 422, glutamate 435, and asparagine 437. Lysine 453 provides a ligand contact to L-glutamate.

This sequence belongs to the tubulin--tyrosine ligase family. Mg(2+) serves as cofactor. In terms of tissue distribution, expressed in many sensory neurons in amphid.

It carries out the reaction L-glutamyl-[protein] + L-glutamate + ATP = gamma-L-glutamyl-L-glutamyl-[protein] + ADP + phosphate + H(+). Monoglutamylase which modifies tubulin, adding a single glutamate on the gamma-carboxyl group of specific glutamate residues of target proteins. Involved in the side-chain initiation step of the polyglutamylation reaction but not in the elongation step. Preferentially modifies beta-tail tubulin over the alpha-tubulin. Involved in side-chain glutamylation of tubulin in sensory cilia. Together with ttll-5 and ttll-11, required for male mating. The sequence is that of Tubulin polyglutamylase ttll-4 from Caenorhabditis elegans.